The following is a 215-amino-acid chain: Large ribosomal subunit protein uL4c (215 aa).

A disordered region spans residues 51-87 (QKQGTVSTKTRSEVRGGGKKPWRQKGTGRARAGSSRS). The span at 67-78 (GGKKPWRQKGTG) shows a compositional bias: basic residues.

Belongs to the universal ribosomal protein uL4 family. In terms of assembly, part of the 50S ribosomal subunit.

It is found in the plastid. The protein localises to the chloroplast. Functionally, probably binds the 23S rRNA. This Thalassiosira pseudonana (Marine diatom) protein is Large ribosomal subunit protein uL4c (rpl4).